A 303-amino-acid chain; its full sequence is Methionyl-tRNA formyltransferase (303 aa).

108–111 is a (6S)-5,6,7,8-tetrahydrofolate binding site; the sequence is SDLP.

Belongs to the Fmt family.

The enzyme catalyses L-methionyl-tRNA(fMet) + (6R)-10-formyltetrahydrofolate = N-formyl-L-methionyl-tRNA(fMet) + (6S)-5,6,7,8-tetrahydrofolate + H(+). Its function is as follows. Attaches a formyl group to the free amino group of methionyl-tRNA(fMet). The formyl group appears to play a dual role in the initiator identity of N-formylmethionyl-tRNA by promoting its recognition by IF2 and preventing the misappropriation of this tRNA by the elongation apparatus. The sequence is that of Methionyl-tRNA formyltransferase from Rickettsia typhi (strain ATCC VR-144 / Wilmington).